The chain runs to 562 residues: Nucleoprotein (562 aa).

The interval 53–238 is binding site for the cap structure m7GTP; it reads MRRVKRDDSD…ITQEESQINI (186 aa). Mn(2+) is bound by residues Asp381 and Glu383. Zn(2+) contacts are provided by Glu391, Cys498, His501, and Cys522. Residue Asp526 participates in Mn(2+) binding.

The protein belongs to the arenaviridae nucleocapsid protein family. Homomultimerizes to form the nucleocapsid. Binds to viral genomic RNA. Interacts with glycoprotein G2. Interacts with protein Z; this interaction probably directs the encapsidated genome to budding sites. Interacts with protein L; this interaction does not interfere with Z-L interaction. Interacts with host IKBKE (via Protein kinase domain); the interaction inhibits IKBKE kinase activity.

It is found in the virion. The protein localises to the host cytoplasm. Its function is as follows. Encapsidates the genome, protecting it from nucleases. The encapsidated genomic RNA is termed the nucleocapsid (NC). Serves as template for viral transcription and replication. The increased presence of protein N in host cell does not seem to trigger the switch from transcription to replication as observed in other negative strain RNA viruses. Through the interaction with host IKBKE, strongly inhibits the phosphorylation and nuclear translocation of host IRF3, a protein involved in interferon activation pathway, leading to the inhibition of interferon-beta and IRF3-dependent promoters activation. Also encodes a functional 3'-5' exoribonuclease that degrades preferentially dsRNA substrates and thereby participates in the suppression of interferon induction. In Neotoma (wood rats), this protein is Nucleoprotein.